The sequence spans 544 residues: Glucans biosynthesis protein G (544 aa).

Residues 1–34 form the signal peptide; that stretch reads MVSLLRCQSSKPYSSLICSLALGVAFALSGTAYA.

This sequence belongs to the OpgD/OpgG family.

It is found in the periplasm. It participates in glycan metabolism; osmoregulated periplasmic glucan (OPG) biosynthesis. Functionally, involved in the biosynthesis of osmoregulated periplasmic glucans (OPGs). This is Glucans biosynthesis protein G from Shewanella putrefaciens (strain CN-32 / ATCC BAA-453).